Consider the following 518-residue polypeptide: 3-octaprenyl-4-hydroxybenzoate carboxy-lyase (518 aa).

Mn(2+) is bound at residue Asn177. Prenylated FMN contacts are provided by residues Ile180–Arg182, Arg194–Leu196, and Arg199–Gly200. Glu243 contributes to the Mn(2+) binding site. Catalysis depends on Asp318, which acts as the Proton donor.

Belongs to the UbiD family. As to quaternary structure, homohexamer. It depends on prenylated FMN as a cofactor. Mn(2+) serves as cofactor.

The protein localises to the cell membrane. The catalysed reaction is a 4-hydroxy-3-(all-trans-polyprenyl)benzoate + H(+) = a 2-(all-trans-polyprenyl)phenol + CO2. It functions in the pathway cofactor biosynthesis; ubiquinone biosynthesis. Catalyzes the decarboxylation of 3-octaprenyl-4-hydroxy benzoate to 2-octaprenylphenol, an intermediate step in ubiquinone biosynthesis. This Burkholderia lata (strain ATCC 17760 / DSM 23089 / LMG 22485 / NCIMB 9086 / R18194 / 383) protein is 3-octaprenyl-4-hydroxybenzoate carboxy-lyase.